The following is a 552-amino-acid chain: Sensor histidine kinase DpiB (552 aa).

The Cytoplasmic segment spans residues 1-21 (MLQLNENKQFAFFQRLAFPLR). The chain crosses the membrane as a helical span at residues 22–42 (IFLLILVFSIFVIAALAQYFT). At 43–182 (ASFEDYLTLH…DSWRAEFLLP (140 aa)) the chain is on the periplasmic side. The chain crosses the membrane as a helical span at residues 183-203 (MAGVFVVLLGILMLLSWFLAA). Over 204–552 (HIRRQMMGME…NDSSINPIDR (349 aa)) the chain is Cytoplasmic. In terms of domain architecture, PAS spans 222 to 292 (RQQEALFSSV…IDEKRQDVVA (71 aa)). In terms of domain architecture, Histidine kinase spans 344–541 (TLRHEHLNWM…LFSIYIPKVK (198 aa)). A Phosphohistidine; by autocatalysis modification is found at His347.

Autophosphorylated.

The protein resides in the cell inner membrane. It catalyses the reaction ATP + protein L-histidine = ADP + protein N-phospho-L-histidine.. Its activity is regulated as follows. Autophosphorylation is induced in vitro by dithiothreitol (DTT). In terms of biological role, member of the two-component regulatory system DpiA/DpiB, which is essential for expression of citrate-specific fermentation genes and genes involved in plasmid inheritance. Could be involved in response to both the presence of citrate and external redox conditions. Functions as a sensor kinase that phosphorylates DpiA in the presence of citrate. The protein is Sensor histidine kinase DpiB (dpiB) of Escherichia coli (strain K12).